The primary structure comprises 521 residues: 7-deoxyloganic acid hydroxylase (521 aa).

The helical transmembrane segment at 8-28 (IIFLVFVSLTLYWVYRILDWV) threads the bilayer. N-linked (GlcNAc...) asparagine glycans are attached at residues N107 and N311. C469 lines the heme pocket.

The protein belongs to the cytochrome P450 family. Mostly present in actively growing aerial organs, including leaves, flower buds and stems, and, to a lower extent, in mature leaves, roots and opened flowers. Expressed in the leaf internal phloem-associated parenchyma (IPAP) inside the mesophyll.

The protein localises to the endoplasmic reticulum membrane. The enzyme catalyses 7-deoxyloganate + reduced [NADPH--hemoprotein reductase] + O2 = loganate + oxidized [NADPH--hemoprotein reductase] + H2O + H(+). Its pathway is alkaloid biosynthesis. In terms of biological role, component of the seco-iridoid and derivatives monoterpenoid indole alkaloids (MIAs, e.g. vincristine, quinine, and strychnine) biosynthesis pathway. Catalyzes the conversion of 7-deoxyloganic acid into loganic acid. Not active on 7-deoxyloganetic acid. In Catharanthus roseus (Madagascar periwinkle), this protein is 7-deoxyloganic acid hydroxylase.